The sequence spans 1173 residues: MPVVWPTLLDLSRDECKRILRKLELEAYAGVISALRAQGDLTKDKKELLGELTRVLSISTERHRAEVRRAVNDERLTTIAHHMSGPNSSSEWSIEGRRLVPLMPRLVPQTAFTVMANAVANATAHQNASLPLPAETANKEVVVCYSYTSTTSTPPSASAPSSSSAAVKSPRPASPASNVVVLPSGSTVYVKSVSCSDEDEKPRKRRRTSSSSSSPVLLKEVPKVAVTAPGPKTITLPVSGGPKISNLMQSIANSLPPHMSPVKITFTKPSTQTTNTTTQKVIIVTTSPSSNFVPNILSKSHNYAAVSKLVSSAALTASSQKQTMVISAGGSSVAPGPGPVAVTTVVSSTPSVVMSTVAQAGSAAVKVASTRLPSPKALIGSPSQILQIPKAQQAVLQSAAPKALQGSISTAQSTALAAAGPGAKPTIQIKQESGVKIITQQMQPSKILPKPSSAALPSSSSAPIMVVSSNGAIMTTKLVSTPTGSASTYTRPTVSPMGTRVATSPAGATYVKTTSGSIITVVPKALATLGGKIITTSMVSGTTTKITTIPMTSKPNVIVVQKTTGKGTTIQGLPGKNVVTTLLNAGGEKTLQAIPGAKPAIITASRPITKMIVTQPKSLGAGVQPSTTTKIIPTKIVYGQQGKTQVLIKPKPMAFQTAVVSEQTRQLVSETLQQVNRSAENNTTSTHTSAAAAGLENRDDTHTYTEGSPVPSDSTHDAPPVVHLISSRGQEWAEQEVSVESSPALIYQELTAESQSATSTIKALLELQQTSVKEKSEAKPRQHTIDLSQMAVPIPVSAEQRESPEPSGQSAAESDAHTEFIPIGKVSKAAEVSASSTPGQSASAVSAAPHVVKISTAAVTTQQVEAQVKPQQEQVLVEECELEGDTLDPQTGLFYRSSPQQQLSRVCEAASSSSSSSSSSSRRAEPPLTVKILTHRSSSSAPATAASANTPHTPQLPRLQQAPTTHNRPNTHTQLSQPPPLQAHHPVGSSKTSSGAQVQQPIITQGATVTKITFGAPHVPRAPVSSSSSSEAALKLQAESSSEKPSVPDILKISMMEAEIDPGAEPMLVDSSSDCGPLTKAPAGPSLISSSKQTLAHGPFSRKSKELDIIQVIPQYSIMPDSSQSNVVVEPSGFLEISDYTSQRLDEEQAMEQEVDSSNDEGAAASPSADQSQ.

An ENT domain is found at 16–100; it reads CKRILRKLEL…EWSIEGRRLV (85 aa). Low complexity predominate over residues 149 to 177; sequence STTSTPPSASAPSSSSAAVKSPRPASPAS. Disordered regions lie at residues 149–179, 191–216, 676–720, 797–816, 905–998, 1020–1046, and 1139–1173; these read STTS…ASNV, KSVS…SSPV, NRSA…DAPP, SAEQ…ESDA, RVCE…GAQV, PRAP…EKPS, and DYTS…DQSQ. Over residues 683–693 the composition is skewed to low complexity; the sequence is TTSTHTSAAAA. Low complexity-rich tracts occupy residues 911–921 and 937–953; these read SSSSSSSSSSS and SSSS…TPHT. 2 stretches are compositionally biased toward polar residues: residues 961–976 and 989–998; these read QAPT…TQLS and SSKTSSGAQV. The segment covering 1025 to 1040 has biased composition (low complexity); sequence SSSSSSEAALKLQAES. Residues 1148–1159 show a composition bias toward acidic residues; the sequence is EQAMEQEVDSSN.

Homodimer.

The protein resides in the nucleus. Its function is as follows. Regulator which is able to repress transcription, possibly via its interaction with a multiprotein chromatin remodeling complex that modifies the chromatin. In Danio rerio (Zebrafish), this protein is BRCA2-interacting transcriptional repressor EMSY.